The primary structure comprises 219 residues: Resolvase (219 aa).

The 145-residue stretch at 15–159 (VARIYLRAST…EDRRERQRQG (145 aa)) folds into the Resolvase/invertase-type recombinase catalytic domain. Serine 23 acts as the O-(5'-phospho-DNA)-serine intermediate in catalysis.

The protein belongs to the site-specific recombinase resolvase family.

Its function is as follows. Involved in plasmid partition. The chain is Resolvase (parA) from Escherichia coli.